A 309-amino-acid polypeptide reads, in one-letter code: MNTSPKQSGYLKVGNGHEVYFWTAGNPQGKSALYVHGGPGSGTDAGCLKYFDLDTTYVILLDQRGCGQSKAVNPLLHNTTQDLVGDLEALRQHLKLERWTLFGGSWGSTLALVYAITHPQVVEQVFLRALFLGREQDWAEMLLGLGKLFYPYEHQTLLKAIPQACRTDFTKFTNYFYEVLQGNDSALKTQLANAWVKWENTLLSPISYVKDEKAEDANFTFKLALLECHYAKHHSFLKPNFILENVAVLKDKPVHLIHGRFDLVCPLSQALELKRALPTLNLYVTNNAGHSGSDPNNLTTIKHLLKTQL.

The 259-residue stretch at Leu-33 to Ser-291 folds into the AB hydrolase-1 domain. The active-site Nucleophile is the Ser-105. Asp-262 is a catalytic residue. Catalysis depends on His-290, which acts as the Proton donor.

This sequence belongs to the peptidase S33 family.

It is found in the cytoplasm. It carries out the reaction Release of N-terminal proline from a peptide.. Functionally, specifically catalyzes the removal of N-terminal proline residues from peptides. This is Putative proline iminopeptidase (pip) from Mycoplasma pneumoniae (strain ATCC 29342 / M129 / Subtype 1) (Mycoplasmoides pneumoniae).